We begin with the raw amino-acid sequence, 119 residues long: Large ribosomal subunit protein uL18 (119 aa).

It belongs to the universal ribosomal protein uL18 family. Part of the 50S ribosomal subunit; part of the 5S rRNA/L5/L18/L25 subcomplex. Contacts the 5S and 23S rRNAs.

Functionally, this is one of the proteins that bind and probably mediate the attachment of the 5S RNA into the large ribosomal subunit, where it forms part of the central protuberance. This is Large ribosomal subunit protein uL18 from Ruegeria sp. (strain TM1040) (Silicibacter sp.).